A 400-amino-acid chain; its full sequence is Golgin-45 (400 aa).

Residues 1–36 (MEKMTTLKSFESKGILTSTPIRGAGDGMETEEPPKS) are disordered. A Tankyrase-binding motif motif is present at residues 22 to 26 (RGAGD). Position 53 is a phosphoserine (S53). A coiled-coil region spans residues 126–263 (LSEVKKVLEK…LSEREQFRQE (138 aa)). At S356 the chain carries Phosphoserine. Positions 394-400 (QGELLAL) are essential for interaction with GORASP2.

Interacts with GORASP2. Interacts with the GTP-bound form of RAB2, but not with other Golgi Rab proteins. Identified in a complex with RAB2 and GORASP2. Post-translationally, ADP-ribosylated by tankyrase TNKS and TNKS2. Poly-ADP-ribosylated protein is recognized by RNF146, followed by ubiquitination. Ubiquitinated by RNF146 when poly-ADP-ribosylated, leading to its degradation.

The protein resides in the golgi apparatus membrane. In terms of biological role, required for normal Golgi structure and for protein transport from the endoplasmic reticulum (ER) through the Golgi apparatus to the cell surface. The sequence is that of Golgin-45 from Rattus norvegicus (Rat).